Reading from the N-terminus, the 180-residue chain is Large ribosomal subunit protein uL5 (180 aa).

This sequence belongs to the universal ribosomal protein uL5 family. As to quaternary structure, part of the 50S ribosomal subunit; part of the 5S rRNA/L5/L18/L25 subcomplex. Contacts the 5S rRNA and the P site tRNA. Forms a bridge to the 30S subunit in the 70S ribosome.

Its function is as follows. This is one of the proteins that bind and probably mediate the attachment of the 5S RNA into the large ribosomal subunit, where it forms part of the central protuberance. In the 70S ribosome it contacts protein S13 of the 30S subunit (bridge B1b), connecting the 2 subunits; this bridge is implicated in subunit movement. Contacts the P site tRNA; the 5S rRNA and some of its associated proteins might help stabilize positioning of ribosome-bound tRNAs. The protein is Large ribosomal subunit protein uL5 of Xanthomonas euvesicatoria pv. vesicatoria (strain 85-10) (Xanthomonas campestris pv. vesicatoria).